We begin with the raw amino-acid sequence, 353 residues long: Guanine nucleotide-binding protein subunit alpha (353 aa).

A disordered region spans residues 1–26 (MGCGMSVEEKEGKARNEEIENQLKRD). Glycine 2 carries N-myristoyl glycine lipidation. Cysteine 3 carries S-palmitoyl cysteine lipidation. The segment covering 7–26 (VEEKEGKARNEEIENQLKRD) has biased composition (basic and acidic residues). The 322-residue stretch at 32–353 (NEIKMLLLGA…QENLRLCGLI (322 aa)) folds into the G-alpha domain. The segment at 35-48 (KMLLLGAGESGKST) is G1 motif. GTP-binding residues include glutamate 43, serine 44, glycine 45, lysine 46, serine 47, threonine 48, aspartate 150, leucine 175, threonine 181, glycine 203, asparagine 269, lysine 270, aspartate 272, and alanine 325. Residue serine 47 coordinates Mg(2+). The segment at 173–181 (DVLRSRVKT) is G2 motif. Threonine 181 is a binding site for Mg(2+). The tract at residues 196 to 205 (YRMFDVGGQR) is G3 motif. The G4 motif stretch occupies residues 265–272 (ILFLNKID). Residues 323 to 328 (TCATDT) form a G5 motif region.

This sequence belongs to the G-alpha family. G(q) subfamily. As to quaternary structure, g proteins are composed of 3 units; alpha, beta and gamma. The alpha chain contains the guanine nucleotide binding site. Mg(2+) serves as cofactor.

Guanine nucleotide-binding proteins (G proteins) are involved as modulators or transducers in various transmembrane signaling systems. The protein is Guanine nucleotide-binding protein subunit alpha (SSG-1) of Sporothrix schenckii (strain ATCC 58251 / de Perez 2211183) (Rose-picker's disease fungus).